Reading from the N-terminus, the 259-residue chain is Hemin import ATP-binding protein HmuV (259 aa).

One can recognise an ABC transporter domain in the interval 6-242 (IQGRDLCVTY…ERIEQVYGYQ (237 aa)). ATP is bound at residue 38–45 (GPNGAGKS).

Belongs to the ABC transporter superfamily. Heme (hemin) importer (TC 3.A.1.14.5) family. In terms of assembly, the complex is composed of two ATP-binding proteins (HmuV), two transmembrane proteins (HmuU) and a solute-binding protein (HmuT).

Its subcellular location is the cell inner membrane. Functionally, part of the ABC transporter complex HmuTUV involved in hemin import. Responsible for energy coupling to the transport system. This is Hemin import ATP-binding protein HmuV from Vibrio cholerae serotype O1 (strain ATCC 39315 / El Tor Inaba N16961).